We begin with the raw amino-acid sequence, 735 residues long: Catalase-peroxidase (735 aa).

The interval 1–25 is disordered; sequence MSDSKCPVTGKSSRQVAGGGTSNRD. A cross-link (tryptophyl-tyrosyl-methioninium (Trp-Tyr) (with M-249)) is located at residues 95 to 223; the sequence is WHSAGTYRMG…LAAVQMGLIY (129 aa). The Proton acceptor role is filled by H96. A cross-link (tryptophyl-tyrosyl-methioninium (Tyr-Met) (with W-95)) is located at residues 223 to 249; the sequence is YINPEGPDGNPDPVASGRDVRETFARM. H264 contributes to the heme b binding site.

The protein belongs to the peroxidase family. Peroxidase/catalase subfamily. In terms of assembly, homodimer or homotetramer. Requires heme b as cofactor. In terms of processing, formation of the three residue Trp-Tyr-Met cross-link is important for the catalase, but not the peroxidase activity of the enzyme.

It catalyses the reaction H2O2 + AH2 = A + 2 H2O. The catalysed reaction is 2 H2O2 = O2 + 2 H2O. Its function is as follows. Bifunctional enzyme with both catalase and broad-spectrum peroxidase activity. The chain is Catalase-peroxidase from Trichlorobacter lovleyi (strain ATCC BAA-1151 / DSM 17278 / SZ) (Geobacter lovleyi).